The chain runs to 255 residues: Hydroxyacylglutathione hydrolase (255 aa).

Zn(2+)-binding residues include His-56, His-58, Asp-60, His-61, His-114, Asp-133, and His-171.

The protein belongs to the metallo-beta-lactamase superfamily. Glyoxalase II family. As to quaternary structure, monomer. It depends on Zn(2+) as a cofactor.

The enzyme catalyses an S-(2-hydroxyacyl)glutathione + H2O = a 2-hydroxy carboxylate + glutathione + H(+). Its pathway is secondary metabolite metabolism; methylglyoxal degradation; (R)-lactate from methylglyoxal: step 2/2. Functionally, thiolesterase that catalyzes the hydrolysis of S-D-lactoyl-glutathione to form glutathione and D-lactic acid. The protein is Hydroxyacylglutathione hydrolase of Bradyrhizobium sp. (strain BTAi1 / ATCC BAA-1182).